Reading from the N-terminus, the 265-residue chain is UPF0294 protein KPK_4510 (265 aa).

It belongs to the UPF0294 family.

The protein localises to the cytoplasm. This chain is UPF0294 protein KPK_4510, found in Klebsiella pneumoniae (strain 342).